A 65-amino-acid chain; its full sequence is Large ribosomal subunit protein bL35 (65 aa).

The segment at 1 to 52 (MPKIKTNRGAAKRFKRTGSGGFKCVQSHRRHILTKKSTKRKRQLRSPDMVHP) is disordered. The segment covering 26 to 44 (QSHRRHILTKKSTKRKRQL) has biased composition (basic residues).

The protein belongs to the bacterial ribosomal protein bL35 family.

The polypeptide is Large ribosomal subunit protein bL35 (Methylococcus capsulatus (strain ATCC 33009 / NCIMB 11132 / Bath)).